The sequence spans 162 residues: Ribosomal RNA large subunit methyltransferase H (162 aa).

S-adenosyl-L-methionine is bound by residues leucine 78, glycine 109, and 128 to 133 (LSPLTL).

It belongs to the RNA methyltransferase RlmH family. As to quaternary structure, homodimer.

The protein localises to the cytoplasm. It carries out the reaction pseudouridine(1915) in 23S rRNA + S-adenosyl-L-methionine = N(3)-methylpseudouridine(1915) in 23S rRNA + S-adenosyl-L-homocysteine + H(+). Its function is as follows. Specifically methylates the pseudouridine at position 1915 (m3Psi1915) in 23S rRNA. This chain is Ribosomal RNA large subunit methyltransferase H, found in Psychrobacter sp. (strain PRwf-1).